The sequence spans 179 residues: Adenine phosphoribosyltransferase (179 aa).

The protein belongs to the purine/pyrimidine phosphoribosyltransferase family. In terms of assembly, homodimer.

Its subcellular location is the cytoplasm. It carries out the reaction AMP + diphosphate = 5-phospho-alpha-D-ribose 1-diphosphate + adenine. Its pathway is purine metabolism; AMP biosynthesis via salvage pathway; AMP from adenine: step 1/1. In terms of biological role, catalyzes a salvage reaction resulting in the formation of AMP, that is energically less costly than de novo synthesis. The polypeptide is Adenine phosphoribosyltransferase (Azorhizobium caulinodans (strain ATCC 43989 / DSM 5975 / JCM 20966 / LMG 6465 / NBRC 14845 / NCIMB 13405 / ORS 571)).